Consider the following 78-residue polypeptide: Large ribosomal subunit protein bL28 (78 aa).

The tract at residues 1–24 is disordered; the sequence is MSRVCQVTGKRPAVGNNRSHANNA.

This sequence belongs to the bacterial ribosomal protein bL28 family.

This is Large ribosomal subunit protein bL28 from Aeromonas salmonicida (strain A449).